A 173-amino-acid polypeptide reads, in one-letter code: 5-hydroxymethyl-dUMP N-hydrolase (173 aa).

A2 carries the N-acetylalanine modification. Residue G16 participates in 5-hydroxymethyl-dUMP binding. S17 carries the post-translational modification Phosphoserine. Residues I18, R19, G20, S87, G89, and E93 each coordinate 5-hydroxymethyl-dUMP. S87 is subject to Phosphoserine. 4 positions are modified to phosphoserine: S112, S117, S127, and S158. S117 contributes to the 5-hydroxymethyl-dUMP binding site.

This sequence belongs to the 2'-deoxynucleoside 5'-phosphate N-hydrolase 1 family. As to quaternary structure, monomer and homodimer.

Its subcellular location is the cytoplasm. The protein resides in the nucleus. It carries out the reaction 5-hydroxymethyl-dUMP + H2O = 5-hydroxymethyluracil + 2-deoxy-D-ribose 5-phosphate. Part of a nucleotide salvage pathway that eliminates epigenetically modified 5-hydroxymethyl-dCMP (hmdCMP) in a two-step process entailing deamination to cytotoxic 5-hydroxymethyl-dUMP (hmdUMP), followed by its hydrolysis into 5-hydroxymethyluracil (hmU) and 2-deoxy-D-ribose 5-phosphate (deoxyribosephosphate). Catalyzes the second step in that pathway, the hydrolysis of the N-glycosidic bond in hmdUMP, degrading this cytotoxic nucleotide to avoid its genomic integration. In Mus musculus (Mouse), this protein is 5-hydroxymethyl-dUMP N-hydrolase.